We begin with the raw amino-acid sequence, 491 residues long: Probable cytosol aminopeptidase (491 aa).

Mn(2+) contacts are provided by Lys-260 and Asp-265. Lys-272 is a catalytic residue. Mn(2+) is bound by residues Asp-284, Asp-343, and Glu-345. Residue Arg-347 is part of the active site.

It belongs to the peptidase M17 family. It depends on Mn(2+) as a cofactor.

The protein localises to the cytoplasm. It carries out the reaction Release of an N-terminal amino acid, Xaa-|-Yaa-, in which Xaa is preferably Leu, but may be other amino acids including Pro although not Arg or Lys, and Yaa may be Pro. Amino acid amides and methyl esters are also readily hydrolyzed, but rates on arylamides are exceedingly low.. The catalysed reaction is Release of an N-terminal amino acid, preferentially leucine, but not glutamic or aspartic acids.. Presumably involved in the processing and regular turnover of intracellular proteins. Catalyzes the removal of unsubstituted N-terminal amino acids from various peptides. The chain is Probable cytosol aminopeptidase from Trichormus variabilis (strain ATCC 29413 / PCC 7937) (Anabaena variabilis).